Here is a 409-residue protein sequence, read N- to C-terminus: Multifunctional CCA protein (409 aa).

2 residues coordinate ATP: Gly-8 and Arg-11. Gly-8 and Arg-11 together coordinate CTP. Mg(2+) contacts are provided by Asp-21 and Asp-23. ATP contacts are provided by Arg-91, Arg-137, and Arg-140. Positions 91, 137, and 140 each coordinate CTP. The 102-residue stretch at 228–329 (TGIHTLMVVE…ITLMDQNDAW (102 aa)) folds into the HD domain.

This sequence belongs to the tRNA nucleotidyltransferase/poly(A) polymerase family. Bacterial CCA-adding enzyme type 1 subfamily. In terms of assembly, monomer. Can also form homodimers and oligomers. It depends on Mg(2+) as a cofactor. Ni(2+) serves as cofactor.

It catalyses the reaction a tRNA precursor + 2 CTP + ATP = a tRNA with a 3' CCA end + 3 diphosphate. It carries out the reaction a tRNA with a 3' CCA end + 2 CTP + ATP = a tRNA with a 3' CCACCA end + 3 diphosphate. Its function is as follows. Catalyzes the addition and repair of the essential 3'-terminal CCA sequence in tRNAs without using a nucleic acid template. Adds these three nucleotides in the order of C, C, and A to the tRNA nucleotide-73, using CTP and ATP as substrates and producing inorganic pyrophosphate. tRNA 3'-terminal CCA addition is required both for tRNA processing and repair. Also involved in tRNA surveillance by mediating tandem CCA addition to generate a CCACCA at the 3' terminus of unstable tRNAs. While stable tRNAs receive only 3'-terminal CCA, unstable tRNAs are marked with CCACCA and rapidly degraded. The protein is Multifunctional CCA protein of Psychromonas ingrahamii (strain DSM 17664 / CCUG 51855 / 37).